A 212-amino-acid polypeptide reads, in one-letter code: Thiamine-phosphate synthase (212 aa).

Residue 38-42 (QLREK) participates in 4-amino-2-methyl-5-(diphosphooxymethyl)pyrimidine binding. Mg(2+)-binding residues include D71 and D90. K138 lines the 4-amino-2-methyl-5-(diphosphooxymethyl)pyrimidine pocket. A 2-[(2R,5Z)-2-carboxy-4-methylthiazol-5(2H)-ylidene]ethyl phosphate-binding site is contributed by G166.

The protein belongs to the thiamine-phosphate synthase family. The cofactor is Mg(2+).

It catalyses the reaction 2-[(2R,5Z)-2-carboxy-4-methylthiazol-5(2H)-ylidene]ethyl phosphate + 4-amino-2-methyl-5-(diphosphooxymethyl)pyrimidine + 2 H(+) = thiamine phosphate + CO2 + diphosphate. The enzyme catalyses 2-(2-carboxy-4-methylthiazol-5-yl)ethyl phosphate + 4-amino-2-methyl-5-(diphosphooxymethyl)pyrimidine + 2 H(+) = thiamine phosphate + CO2 + diphosphate. The catalysed reaction is 4-methyl-5-(2-phosphooxyethyl)-thiazole + 4-amino-2-methyl-5-(diphosphooxymethyl)pyrimidine + H(+) = thiamine phosphate + diphosphate. Its pathway is cofactor biosynthesis; thiamine diphosphate biosynthesis; thiamine phosphate from 4-amino-2-methyl-5-diphosphomethylpyrimidine and 4-methyl-5-(2-phosphoethyl)-thiazole: step 1/1. Its function is as follows. Condenses 4-methyl-5-(beta-hydroxyethyl)thiazole monophosphate (THZ-P) and 2-methyl-4-amino-5-hydroxymethyl pyrimidine pyrophosphate (HMP-PP) to form thiamine monophosphate (TMP). This Chlamydia abortus (strain DSM 27085 / S26/3) (Chlamydophila abortus) protein is Thiamine-phosphate synthase.